A 338-amino-acid chain; its full sequence is Phenylalanine--tRNA ligase alpha subunit (338 aa).

Glu-252 is a Mg(2+) binding site.

Belongs to the class-II aminoacyl-tRNA synthetase family. Phe-tRNA synthetase alpha subunit type 1 subfamily. In terms of assembly, tetramer of two alpha and two beta subunits. The cofactor is Mg(2+).

Its subcellular location is the cytoplasm. It catalyses the reaction tRNA(Phe) + L-phenylalanine + ATP = L-phenylalanyl-tRNA(Phe) + AMP + diphosphate + H(+). The polypeptide is Phenylalanine--tRNA ligase alpha subunit (Pseudomonas aeruginosa (strain ATCC 15692 / DSM 22644 / CIP 104116 / JCM 14847 / LMG 12228 / 1C / PRS 101 / PAO1)).